A 492-amino-acid chain; its full sequence is N-succinylglutamate 5-semialdehyde dehydrogenase (492 aa).

Residue 220–225 participates in NAD(+) binding; the sequence is GSASTG. Active-site residues include Glu243 and Cys277.

It belongs to the aldehyde dehydrogenase family. AstD subfamily.

It catalyses the reaction N-succinyl-L-glutamate 5-semialdehyde + NAD(+) + H2O = N-succinyl-L-glutamate + NADH + 2 H(+). Its pathway is amino-acid degradation; L-arginine degradation via AST pathway; L-glutamate and succinate from L-arginine: step 4/5. Its function is as follows. Catalyzes the NAD-dependent reduction of succinylglutamate semialdehyde into succinylglutamate. This is N-succinylglutamate 5-semialdehyde dehydrogenase from Salmonella schwarzengrund (strain CVM19633).